Reading from the N-terminus, the 355-residue chain is Ion-translocating oxidoreductase complex subunit D (355 aa).

Helical transmembrane passes span Trp23 to Thr43, Leu44 to Phe64, Ala78 to Ala109, and Val129 to Ile149. Thr194 is subject to FMN phosphoryl threonine. The next 5 membrane-spanning stretches (helical) occupy residues Phe221 to Leu241, Ile250 to Pro270, Thr273 to Ala293, Ile307 to Pro327, and Asp328 to Thr348.

This sequence belongs to the NqrB/RnfD family. In terms of assembly, the complex is composed of six subunits: RnfA, RnfB, RnfC, RnfD, RnfE and RnfG. Requires FMN as cofactor.

Its subcellular location is the cell inner membrane. Functionally, part of a membrane-bound complex that couples electron transfer with translocation of ions across the membrane. This chain is Ion-translocating oxidoreductase complex subunit D, found in Vibrio vulnificus (strain CMCP6).